The sequence spans 472 residues: 3-isopropylmalate dehydratase large subunit (472 aa).

3 residues coordinate [4Fe-4S] cluster: C347, C409, and C412.

Belongs to the aconitase/IPM isomerase family. LeuC type 1 subfamily. Heterodimer of LeuC and LeuD. Requires [4Fe-4S] cluster as cofactor.

It catalyses the reaction (2R,3S)-3-isopropylmalate = (2S)-2-isopropylmalate. It functions in the pathway amino-acid biosynthesis; L-leucine biosynthesis; L-leucine from 3-methyl-2-oxobutanoate: step 2/4. Functionally, catalyzes the isomerization between 2-isopropylmalate and 3-isopropylmalate, via the formation of 2-isopropylmaleate. In Salinibacter ruber (strain DSM 13855 / M31), this protein is 3-isopropylmalate dehydratase large subunit.